The sequence spans 699 residues: Polyribonucleotide nucleotidyltransferase (699 aa).

2 residues coordinate Mg(2+): D488 and D494. The KH domain occupies 555 to 614 (PRIYSIKVNPDKIKDVIGKGGSVIRSLTEETNTIIDIEDNGIIKIVALDYDKAKQAIRRI). Residues 624 to 692 (GAVYTGKVSH…RQGRIRLSMK (69 aa)) enclose the S1 motif domain.

This sequence belongs to the polyribonucleotide nucleotidyltransferase family. As to quaternary structure, component of the RNA degradosome, which is a multiprotein complex involved in RNA processing and mRNA degradation. Mg(2+) is required as a cofactor.

The protein localises to the cytoplasm. It carries out the reaction RNA(n+1) + phosphate = RNA(n) + a ribonucleoside 5'-diphosphate. Functionally, involved in mRNA degradation. Catalyzes the phosphorolysis of single-stranded polyribonucleotides processively in the 3'- to 5'-direction. This chain is Polyribonucleotide nucleotidyltransferase, found in Blochmanniella pennsylvanica (strain BPEN).